We begin with the raw amino-acid sequence, 740 residues long: MFKKTKPRISILALTISCAIYSGAALAQDAANSNKFWWPEQLNLSPLRQHGVESNPMGSTFNYAQAFKKLDLNAVKADIKALMTQSQDWWPADYGHYGPFFIRMAWHSAGTYRIYDGRGGAGGGQQRFEPLNSWPDNVNLDRARRLLWPIKQKYGSSISWADLMVLTGNVALESMGFKTFGFAGGRQDDWEADTVYWGPEKKWLDDKRYSGDRTLEKPLAAVQMGLIYVNPEGPNGVPDPLLAAKDIRDTFGRMAMNDEETVALIAGGHTFGKAHGAHKPETCLGKEPAAAGIEEQGLGWTNKCGKGNAEDTITSGLEGAWSVNPIAWTTQYLDNLFAFEWVQVRSPAGAVQWIPKDGQAANLVPDAHDKTKRHAPIMFTTDLALKEDPEYRKISLRFKENPKEFELAFAKAWFKLTHRDMGPRVRYLGNEVPGEILLWQDPVPEVDHPLIDAADITKLKSSLLSSGLSSAELVRTAWAAAASFRGTDLRGGANGARIRLAPQNTWAVNNPRELNRALTRLEKVQGDFNKASTGGKKVSLADVIVLGGVAAVEQAAKKAGYAVEVPFIPGRTDASQAQTDVTSFAVLEPTADGFRNYYAKDNTLPPTDMLVERANLLTLTVPEMTVLVGGLRVLGANSDAAKNGIFTDKPGTLSNDFFINLLDMSTQWRKSAKTGGLYEGLDRKTGKLKWTATPVDLIFGSHSELRAVAEVYAANDGQEKFVNDFVKAWHKVMMLDRFDW.

An N-terminal signal peptide occupies residues 1–27; the sequence is MFKKTKPRISILALTISCAIYSGAALA. The segment at residues 106–228 is a cross-link (tryptophyl-tyrosyl-methioninium (Trp-Tyr) (with M-254)); sequence WHSAGTYRIY…LAAVQMGLIY (123 aa). The active-site Proton acceptor is the His-107. Positions 228–254 form a cross-link, tryptophyl-tyrosyl-methioninium (Tyr-Met) (with W-106); that stretch reads YVNPEGPNGVPDPLLAAKDIRDTFGRM. His-269 contributes to the heme b binding site.

Belongs to the peroxidase family. Peroxidase/catalase subfamily. In terms of assembly, homodimer or homotetramer. It depends on heme b as a cofactor. Formation of the three residue Trp-Tyr-Met cross-link is important for the catalase, but not the peroxidase activity of the enzyme.

It catalyses the reaction H2O2 + AH2 = A + 2 H2O. The catalysed reaction is 2 H2O2 = O2 + 2 H2O. In terms of biological role, bifunctional enzyme with both catalase and broad-spectrum peroxidase activity. The sequence is that of Catalase-peroxidase 2 from Cellvibrio japonicus (strain Ueda107) (Pseudomonas fluorescens subsp. cellulosa).